The primary structure comprises 101 residues: UPF0473 protein MGAS10750_Spy1887 (101 aa).

This sequence belongs to the UPF0473 family.

This is UPF0473 protein MGAS10750_Spy1887 from Streptococcus pyogenes serotype M4 (strain MGAS10750).